We begin with the raw amino-acid sequence, 2599 residues long: Non-reducing polyketide synthase azaA (2599 aa).

The tract at residues Pro95 to Gln231 is N-terminal acylcarrier protein transacylase domain (SAT). Cys132 (nucleophile; for transacylase activity) is an active-site residue. The Proton donor/acceptor; for transacylase activity role is filled by His250. A Ketosynthase family 3 (KS3) domain is found at Pro372–Gln790. Active-site for beta-ketoacyl synthase activity residues include Cys539, His674, and His713. The segment at Phe902–Gly1193 is malonyl-CoA:ACP transacylase (MAT) domain. The N-terminal hotdog fold stretch occupies residues Pro1282–Asp1413. The 310-residue stretch at Pro1282–Ser1591 folds into the PKS/mFAS DH domain. Residues Leu1310–Ser1589 form a product template (PT) domain region. The active-site Proton acceptor; for dehydratase activity is His1314. The segment at Ala1443–Ser1591 is C-terminal hotdog fold. Asp1499 acts as the Proton donor; for dehydratase activity in catalysis. Positions Glu1601–Gln1652 are disordered. Residues Ala1602 to Arg1619 show a composition bias toward low complexity. The 75-residue stretch at Gln1653–Val1727 folds into the Carrier domain. Position 1687 is an O-(pantetheine 4'-phosphoryl)serine (Ser1687). The tract at residues Asn1749–Ser1779 is disordered. Positions Leu1750 to Asp1766 are enriched in low complexity. A compositionally biased stretch (polar residues) spans Leu1769–Ser1779. The interval Asp1952 to Asp2140 is methyltransferase domain. An NADPH-binding (R) domain region spans residues Ile2222–Ala2467.

The cofactor is pantetheine 4'-phosphate.

Its pathway is secondary metabolite biosynthesis. In terms of biological role, non-reducing polyketide synthase; part of the gene cluster that mediates the biosynthesis of azaphilones, a class of fungal metabolites characterized by a highly oxygenated pyrano-quinone bicyclic core and exhibiting a broad range of bioactivities. In the first step, the non-reducing polyketide synthase azaA forms the hexaketide precursor from successive condensations of five malonyl-CoA units, presumably with a simple acetyl-CoA starter unit. The reactive polyketide chain then undergoes a PT-mediated C2-C7 cyclization to afford the aromatic ring and is eventually released as an aldehyde through the R-domain. The putative ketoreductase azaE is proposed to catalyze the reduction of the terminal ketone resulting in the early culture product FK17-P2a. The monooxygenase azaH was demonstrated to be the only enzyme required to convert FK17-P2a to azanigerone E. AzaH first hydroxylates the benzaldehyde intermediate FK17-P2a at C4, which triggers the formation of the pyran-ring to afford azanigerone E. In parallel, the 2,4-dimethylhexanoyl chain is synthesized by the HR-PKS azaB and is proposed to be transferred to the C4-hydroxyl of azanigerone E by the acyltransferase azaD directly from the ACP domain of azaB. Alternatively, the 2,4-dimethyl-hexanoyl chain may be offloaded from the HR-PKS as a carboxylic acid and converted to an acyl-CoA by azaF. The resulting acyl-CoA molecule could then be taken up as a substrate by AzaD to form azanigerone B. To yield the carboxylic acid substituent in azanigerone A, the hydroxypropyl side chain of azanigerone B would need to undergo a C-C oxidative cleavage catalyzed by cytochrome P450 AzaI. AzaI is proposed to act on a vicinal diol that leads to a C-C bond scission either through an alkoxyradical intermediate or a peroxy complex. In the biosynthesis of azanigerone A, azanigerone B first undergoes hydroxylation at C10, possibly catalyzed by one of the two FAD-dependent monooxygenases encoded in the cluster, azaG or azaL, resulting in the vicinal diol azanigerone C. Oxidative cleavage of azanigerone C by azaI would yield the corresponding aldehyde derivative of azanigerone A. Finally, the dehydrogenase azaJ is proposed to convert the aldehyde functional group into the carboxylic acid, completing the conversion from azanigerone B to azanigerone A. Alternatively, the oxidation of aldehyde to carboxylic acid may be catalyzed by the same P450 enzyme azaI via consecutive oxidation or by endogenous alcohol dehydrogenase. In Aspergillus niger (strain ATCC 1015 / CBS 113.46 / FGSC A1144 / LSHB Ac4 / NCTC 3858a / NRRL 328 / USDA 3528.7), this protein is Non-reducing polyketide synthase azaA.